A 403-amino-acid polypeptide reads, in one-letter code: 4,4'-dithiodibutanoate disulfide reductase (403 aa).

Glutamine 103 contacts FMN. The Proton donor role is filled by tyrosine 173. 348-349 is a binding site for FMN; it reads AR.

It belongs to the NADH:flavin oxidoreductase/NADH oxidase family. FMN serves as cofactor.

It catalyses the reaction 2 4-sulfanylbutanoate + NAD(+) = 4,4'-disulfanyldibutanoate + NADH + H(+). With respect to regulation, inactivated by cobalt, nickel and zinc ions. Involved in the degradation of the organic disulfide 4,4'-dithiodibutyric acid (DTDB). Catalyzes the initial cleavage of DTDB into 2 molecules of 4-mercaptobutyric acid (4MB). Low activities are observed with other disulfide compounds, such as 3,3'-dithiodipropionic acid DTDP, 3,3'-thiodipropionic acid TDP and DTNB. This is 4,4'-dithiodibutanoate disulfide reductase from Rhodococcus erythropolis (Arthrobacter picolinophilus).